The chain runs to 78 residues: Large ribosomal subunit protein eL20 (78 aa).

Belongs to the eukaryotic ribosomal protein eL20 family. Part of the 50S ribosomal subunit. Binds 23S rRNA.

In Nanoarchaeum equitans (strain Kin4-M), this protein is Large ribosomal subunit protein eL20.